The chain runs to 337 residues: Glycerol-3-phosphate dehydrogenase [NAD(P)+] (337 aa).

3 residues coordinate NADPH: Trp11, Arg30, and Lys113. Residues Lys113, Gly141, and Ser143 each coordinate sn-glycerol 3-phosphate. Ala145 provides a ligand contact to NADPH. Positions 196, 249, 259, 260, and 261 each coordinate sn-glycerol 3-phosphate. The active-site Proton acceptor is the Lys196. An NADPH-binding site is contributed by Arg260. Residues Val284 and Glu286 each coordinate NADPH.

Belongs to the NAD-dependent glycerol-3-phosphate dehydrogenase family.

It localises to the cytoplasm. It carries out the reaction sn-glycerol 3-phosphate + NAD(+) = dihydroxyacetone phosphate + NADH + H(+). It catalyses the reaction sn-glycerol 3-phosphate + NADP(+) = dihydroxyacetone phosphate + NADPH + H(+). Its pathway is membrane lipid metabolism; glycerophospholipid metabolism. In terms of biological role, catalyzes the reduction of the glycolytic intermediate dihydroxyacetone phosphate (DHAP) to sn-glycerol 3-phosphate (G3P), the key precursor for phospholipid synthesis. The protein is Glycerol-3-phosphate dehydrogenase [NAD(P)+] of Leptothrix cholodnii (strain ATCC 51168 / LMG 8142 / SP-6) (Leptothrix discophora (strain SP-6)).